Consider the following 150-residue polypeptide: Large ribosomal subunit protein bL9 (150 aa).

This sequence belongs to the bacterial ribosomal protein bL9 family.

In terms of biological role, binds to the 23S rRNA. This is Large ribosomal subunit protein bL9 from Sodalis glossinidius (strain morsitans).